Here is a 317-residue protein sequence, read N- to C-terminus: Lactamase-like protein adaB (317 aa).

Zn(2+) contacts are provided by histidine 97, histidine 99, aspartate 101, and histidine 102. Aspartate 101 serves as the catalytic Proton donor/acceptor.

The protein belongs to the metallo-beta-lactamase superfamily. Requires Zn(2+) as cofactor.

The catalysed reaction is 3-(2,4-dioxopentyl)-2,3,6,8,9-pentahydroxy-1-oxo-1,2,3,4-tetrahydroanthracene-2-carboxyl-[ACP] = 2-acetyl-3,4a,8,10,11,12a-hexahydroxy-1,4,4a,5,12,12a-hexahydrotetracene-1,12-dione + holo-[ACP] + H(+). It participates in secondary metabolite biosynthesis. Its function is as follows. Lactamase-like protein; part of the gene cluster that mediates the biosynthesis of the linear tetracyclic TAN-1612 neuropeptide Y receptor antagonist. The decaketide backbone of TAN-1612 is synthesized by the non-reducing polyketide synthase adaA via condensation of one acetyl-CoA starter unit with 9 malonyl-CoA units. The FAD-dependent monooxygenase adaC then performs hydroxylation at C2 while the polaketide chain is still attached to the NRPKS adaA. The alpha-hydroxylation step at C2 appears to be crucial for the following C18-C1 Claisen cyclization and release of the C9-hydroxyl version of TAN-1612 from the NRPKS adaA, two steps performed by the lactamase-like protein adaB. Finally, the O-methyltransferase adaD performs the C9 O-methylation to complete the biosynthesis of TAN-1612. The chain is Lactamase-like protein adaB from Aspergillus niger (strain ATCC MYA-4892 / CBS 513.88 / FGSC A1513).